Here is a 208-residue protein sequence, read N- to C-terminus: N-(5'-phosphoribosyl)anthranilate isomerase (208 aa).

This sequence belongs to the TrpF family.

The enzyme catalyses N-(5-phospho-beta-D-ribosyl)anthranilate = 1-(2-carboxyphenylamino)-1-deoxy-D-ribulose 5-phosphate. It participates in amino-acid biosynthesis; L-tryptophan biosynthesis; L-tryptophan from chorismate: step 3/5. The protein is N-(5'-phosphoribosyl)anthranilate isomerase of Deinococcus radiodurans (strain ATCC 13939 / DSM 20539 / JCM 16871 / CCUG 27074 / LMG 4051 / NBRC 15346 / NCIMB 9279 / VKM B-1422 / R1).